The sequence spans 187 residues: Elongation factor P (187 aa).

This sequence belongs to the elongation factor P family.

The protein localises to the cytoplasm. It functions in the pathway protein biosynthesis; polypeptide chain elongation. Its function is as follows. Involved in peptide bond synthesis. Stimulates efficient translation and peptide-bond synthesis on native or reconstituted 70S ribosomes in vitro. Probably functions indirectly by altering the affinity of the ribosome for aminoacyl-tRNA, thus increasing their reactivity as acceptors for peptidyl transferase. The polypeptide is Elongation factor P (Parafrankia sp. (strain EAN1pec)).